Consider the following 158-residue polypeptide: S-ribosylhomocysteine lyase (158 aa).

Residues H54, H58, and C124 each coordinate Fe cation.

This sequence belongs to the LuxS family. As to quaternary structure, homodimer. Fe cation serves as cofactor.

The enzyme catalyses S-(5-deoxy-D-ribos-5-yl)-L-homocysteine = (S)-4,5-dihydroxypentane-2,3-dione + L-homocysteine. Functionally, involved in the synthesis of autoinducer 2 (AI-2) which is secreted by bacteria and is used to communicate both the cell density and the metabolic potential of the environment. The regulation of gene expression in response to changes in cell density is called quorum sensing. Catalyzes the transformation of S-ribosylhomocysteine (RHC) to homocysteine (HC) and 4,5-dihydroxy-2,3-pentadione (DPD). The chain is S-ribosylhomocysteine lyase from Lactiplantibacillus plantarum (strain ATCC BAA-793 / NCIMB 8826 / WCFS1) (Lactobacillus plantarum).